The following is a 949-amino-acid chain: Copper-transporting ATPase PAA1, chloroplastic (949 aa).

A chloroplast-targeting transit peptide spans 1–103 (MESTLSAFST…SSSPSFRSIS (103 aa)). Residues 113–126 (YNGGSGGGGGGGSE) are compositionally biased toward gly residues. The disordered stretch occupies residues 113–142 (YNGGSGGGGGGGSESGDSKSKLGANASDGV). Residues 148–222 (DIIILDVGGM…HLTNCGFQST (75 aa)) form the HMA domain. Cysteine 159 and cysteine 162 together coordinate Cu(+). 6 consecutive transmembrane segments (helical) span residues 253 to 274 (LAVS…FLGV), 287 to 306 (FHVS…LVLD), 314 to 334 (GSPN…SVSS), 349 to 369 (EEPV…QRAK), 502 to 524 (VAGR…WNLF), and 543 to 560 (LQLS…ALGL). Aspartate 598 serves as the catalytic 4-aspartylphosphate intermediate. Residue 807 to 814 (GDGINDAA) coordinates ATP. Mg(2+) is bound by residues aspartate 808 and aspartate 812. The next 2 membrane-spanning stretches (helical) occupy residues 863-882 (KQNL…IAAG) and 895-913 (SMAG…TNSL). The tract at residues 925 to 949 (DKNVKPEPKEGTKQPHENTRWKQSS) is disordered.

The protein belongs to the cation transport ATPase (P-type) (TC 3.A.3) family. Type IB subfamily. Expressed in the shoots and roots.

The protein localises to the plastid. It localises to the chloroplast membrane. It catalyses the reaction Cu(+)(in) + ATP + H2O = Cu(+)(out) + ADP + phosphate + H(+). Its function is as follows. Mediates copper transfer across the plastid envelope. Required for the delivery of copper into the plastid stroma, which is essential for the function of copper proteins. Seems to be selective for monovalent copper Cu(+) transport. Also plays a role in glucose signaling-mediated cell proliferation of root meristem in non-green tissues. The chain is Copper-transporting ATPase PAA1, chloroplastic (PAA1) from Arabidopsis thaliana (Mouse-ear cress).